The following is a 135-amino-acid chain: Small ribosomal subunit protein bS16m (135 aa).

The N-terminal 34 residues, 1–34 (MVQLTTVLCKAYRGGHLTIRLALGGCTNRPFYRI), are a transit peptide targeting the mitochondrion. Threonine 130 is subject to Phosphothreonine.

This sequence belongs to the bacterial ribosomal protein bS16 family. Component of the mitochondrial ribosome small subunit (28S) which comprises a 12S rRNA and about 30 distinct proteins.

The protein localises to the mitochondrion. This chain is Small ribosomal subunit protein bS16m (MRPS16), found in Bos taurus (Bovine).